The sequence spans 443 residues: ATP-dependent protease ATPase subunit HslU (443 aa).

Residues I20, 62 to 67, D255, E321, and R393 contribute to the ATP site; that span reads GVGKTE.

Belongs to the ClpX chaperone family. HslU subfamily. A double ring-shaped homohexamer of HslV is capped on each side by a ring-shaped HslU homohexamer. The assembly of the HslU/HslV complex is dependent on binding of ATP.

Its subcellular location is the cytoplasm. ATPase subunit of a proteasome-like degradation complex; this subunit has chaperone activity. The binding of ATP and its subsequent hydrolysis by HslU are essential for unfolding of protein substrates subsequently hydrolyzed by HslV. HslU recognizes the N-terminal part of its protein substrates and unfolds these before they are guided to HslV for hydrolysis. The sequence is that of ATP-dependent protease ATPase subunit HslU from Helicobacter acinonychis (strain Sheeba).